Here is a 291-residue protein sequence, read N- to C-terminus: uncharacterized protein (291 aa).

Residues 77-140 (TVPQSSPTAI…PPTPVVEKSP (64 aa)) are disordered. A compositionally biased stretch (pro residues) spans 125-134 (PVTPAHPPTP).

This is an uncharacterized protein from Synechocystis sp. (strain ATCC 27184 / PCC 6803 / Kazusa).